A 67-amino-acid polypeptide reads, in one-letter code: MSLELLSQLETKIQTALETIELLKLELDEEKEKAANLAEQNHQLKQELSSWNDKITGLVGLLSNQVD.

Positions 3 to 59 form a coiled coil; that stretch reads LELLSQLETKIQTALETIELLKLELDEEKEKAANLAEQNHQLKQELSSWNDKITGLV.

It belongs to the ZapB family. In terms of assembly, homodimer. The ends of the coiled-coil dimer bind to each other, forming polymers. Interacts with FtsZ.

It localises to the cytoplasm. Functionally, non-essential, abundant cell division factor that is required for proper Z-ring formation. It is recruited early to the divisome by direct interaction with FtsZ, stimulating Z-ring assembly and thereby promoting cell division earlier in the cell cycle. Its recruitment to the Z-ring requires functional FtsA or ZipA. This is Cell division protein ZapB from Shewanella amazonensis (strain ATCC BAA-1098 / SB2B).